A 364-amino-acid polypeptide reads, in one-letter code: Cobalt-precorrin-5B C(1)-methyltransferase (364 aa).

Belongs to the CbiD family.

It catalyses the reaction Co-precorrin-5B + S-adenosyl-L-methionine = Co-precorrin-6A + S-adenosyl-L-homocysteine. Its pathway is cofactor biosynthesis; adenosylcobalamin biosynthesis; cob(II)yrinate a,c-diamide from sirohydrochlorin (anaerobic route): step 6/10. In terms of biological role, catalyzes the methylation of C-1 in cobalt-precorrin-5B to form cobalt-precorrin-6A. The chain is Cobalt-precorrin-5B C(1)-methyltransferase from Pseudomonas putida (strain W619).